A 299-amino-acid polypeptide reads, in one-letter code: tRNA dimethylallyltransferase (299 aa).

10 to 17 (GPTAVGKT) contributes to the ATP binding site. Residue 12-17 (TAVGKT) participates in substrate binding. The interaction with substrate tRNA stretch occupies residues 35 to 38 (DSQQ).

Belongs to the IPP transferase family. Monomer. Requires Mg(2+) as cofactor.

It catalyses the reaction adenosine(37) in tRNA + dimethylallyl diphosphate = N(6)-dimethylallyladenosine(37) in tRNA + diphosphate. Catalyzes the transfer of a dimethylallyl group onto the adenine at position 37 in tRNAs that read codons beginning with uridine, leading to the formation of N6-(dimethylallyl)adenosine (i(6)A). This chain is tRNA dimethylallyltransferase, found in Streptococcus thermophilus (strain ATCC BAA-491 / LMD-9).